A 190-amino-acid polypeptide reads, in one-letter code: Small ribosomal subunit protein eS7 (190 aa).

It belongs to the eukaryotic ribosomal protein eS7 family.

The polypeptide is Small ribosomal subunit protein eS7 (RPS7) (Avicennia marina (Grey mangrove)).